Reading from the N-terminus, the 99-residue chain is uncharacterized protein (99 aa).

The chain crosses the membrane as a helical span at residues 10–29; the sequence is ELSVHTGTVTHTIFVYVFLG.

It localises to the membrane. This is an uncharacterized protein from Schizosaccharomyces pombe (strain 972 / ATCC 24843) (Fission yeast).